We begin with the raw amino-acid sequence, 339 residues long: Anthranilate phosphoribosyltransferase (339 aa).

5-phospho-alpha-D-ribose 1-diphosphate is bound by residues glycine 82, 85 to 86, 92 to 95, 110 to 118, and serine 122; these read GD, NIST, and KHGNRGISS. Anthranilate is bound at residue glycine 82. Serine 94 serves as a coordination point for Mg(2+). Asparagine 113 provides a ligand contact to anthranilate. Residue arginine 168 coordinates anthranilate. Positions 227 and 228 each coordinate Mg(2+).

It belongs to the anthranilate phosphoribosyltransferase family. In terms of assembly, homodimer. Mg(2+) is required as a cofactor.

The enzyme catalyses N-(5-phospho-beta-D-ribosyl)anthranilate + diphosphate = 5-phospho-alpha-D-ribose 1-diphosphate + anthranilate. It participates in amino-acid biosynthesis; L-tryptophan biosynthesis; L-tryptophan from chorismate: step 2/5. Functionally, catalyzes the transfer of the phosphoribosyl group of 5-phosphorylribose-1-pyrophosphate (PRPP) to anthranilate to yield N-(5'-phosphoribosyl)-anthranilate (PRA). The protein is Anthranilate phosphoribosyltransferase of Vesicomyosocius okutanii subsp. Calyptogena okutanii (strain HA).